The chain runs to 363 residues: GTPase Obg (363 aa).

Positions M1–I159 constitute an Obg domain. In terms of domain architecture, OBG-type G spans A160–V327. Residues G166 to S173, F191 to H195, D212 to G215, S279 to D282, and S308 to V310 each bind GTP. The Mg(2+) site is built by S173 and T193. The tract at residues E332–P363 is disordered. Acidic residues predominate over residues N353 to P363.

It belongs to the TRAFAC class OBG-HflX-like GTPase superfamily. OBG GTPase family. Monomer. Mg(2+) serves as cofactor.

The protein localises to the cytoplasm. Functionally, an essential GTPase which binds GTP, GDP and possibly (p)ppGpp with moderate affinity, with high nucleotide exchange rates and a fairly low GTP hydrolysis rate. Plays a role in control of the cell cycle, stress response, ribosome biogenesis and in those bacteria that undergo differentiation, in morphogenesis control. The polypeptide is GTPase Obg (Rhizobium etli (strain ATCC 51251 / DSM 11541 / JCM 21823 / NBRC 15573 / CFN 42)).